A 412-amino-acid polypeptide reads, in one-letter code: Serine hydroxymethyltransferase 1 (412 aa).

Residues leucine 116 and 120–122 (GHL) each bind (6S)-5,6,7,8-tetrahydrofolate. At lysine 225 the chain carries N6-(pyridoxal phosphate)lysine.

It belongs to the SHMT family. In terms of assembly, homodimer. It depends on pyridoxal 5'-phosphate as a cofactor.

It localises to the cytoplasm. The catalysed reaction is (6R)-5,10-methylene-5,6,7,8-tetrahydrofolate + glycine + H2O = (6S)-5,6,7,8-tetrahydrofolate + L-serine. Its pathway is one-carbon metabolism; tetrahydrofolate interconversion. It functions in the pathway amino-acid biosynthesis; glycine biosynthesis; glycine from L-serine: step 1/1. Catalyzes the reversible interconversion of serine and glycine with tetrahydrofolate (THF) serving as the one-carbon carrier. This reaction serves as the major source of one-carbon groups required for the biosynthesis of purines, thymidylate, methionine, and other important biomolecules. Also exhibits THF-independent aldolase activity toward beta-hydroxyamino acids, producing glycine and aldehydes, via a retro-aldol mechanism. This chain is Serine hydroxymethyltransferase 1, found in Pseudomonas fluorescens (strain Pf0-1).